A 46-amino-acid chain; its full sequence is Large ribosomal subunit protein bL34 (46 aa).

The interval 25 to 46 (TASGRQVLRRRRAKGRYRLAVS) is disordered. The segment covering 31-46 (VLRRRRAKGRYRLAVS) has biased composition (basic residues).

This sequence belongs to the bacterial ribosomal protein bL34 family.

This Synechococcus sp. (strain JA-3-3Ab) (Cyanobacteria bacterium Yellowstone A-Prime) protein is Large ribosomal subunit protein bL34.